The sequence spans 436 residues: Xylose isomerase (436 aa).

Active-site residues include histidine 100 and aspartate 103. Mg(2+) contacts are provided by glutamate 231, glutamate 267, histidine 270, aspartate 295, aspartate 306, aspartate 308, and aspartate 338.

Belongs to the xylose isomerase family. In terms of assembly, homotetramer. Mg(2+) is required as a cofactor.

The protein localises to the cytoplasm. The catalysed reaction is alpha-D-xylose = alpha-D-xylulofuranose. This chain is Xylose isomerase, found in Chelativorans sp. (strain BNC1).